A 144-amino-acid polypeptide reads, in one-letter code: Large ribosomal subunit protein uL15 (144 aa).

Residues 1-52 form a disordered region; sequence MRLNTLSPAEGAKHAPKRVGRGIGSGLGKTAGRGHKGQNSRSGGGVRRGFEG. Positions 21-31 are enriched in gly residues; the sequence is RGIGSGLGKTA.

This sequence belongs to the universal ribosomal protein uL15 family. In terms of assembly, part of the 50S ribosomal subunit.

Its function is as follows. Binds to the 23S rRNA. This chain is Large ribosomal subunit protein uL15, found in Yersinia pseudotuberculosis serotype O:1b (strain IP 31758).